Here is a 375-residue protein sequence, read N- to C-terminus: MADKRDYYEVLGVPKDADDAAIKKAYRQLAKKYHPDMNPGDKEAEIKFKEASEAYAVLSDAEKRRQYDQFGHAAFEGGAGGAGAGGFDFDFGDMGDIFGDLFGGMFGGGGSRRNSNGPRRGADVRVNVRITFDESVRGTTKKIDVTLKDECSSCHGTGAKPGTSPETCSKCGGRGQVTFTQQSFLGMVRSQQPCPDCHGTGKIIKEKCPDCYGTGYISSKKTIEVNIPAGIDNGQCVRIQGKGEPGVNGGPRGDLLVAVIISASTEFERDGYNIFSNVVISYPTAVLGGEIKVKTVDGEVLYEVKPGTASGTRVRLKGKGMPSVRNAAQRGDHYITLIVDIPTKLNQEQKDALMAYEKALTGNERHGKKKGLFGK.

The 66-residue stretch at D6–G71 folds into the J domain. A CR-type zinc finger spans residues G138 to K220. The Zn(2+) site is built by C151, C154, C168, C171, C194, C197, C208, and C211. CXXCXGXG motif repeat units lie at residues C151–G158, C168–G175, C194–G201, and C208–G215.

The protein belongs to the DnaJ family. In terms of assembly, homodimer. Zn(2+) serves as cofactor.

The protein resides in the cytoplasm. Functionally, participates actively in the response to hyperosmotic and heat shock by preventing the aggregation of stress-denatured proteins and by disaggregating proteins, also in an autonomous, DnaK-independent fashion. Unfolded proteins bind initially to DnaJ; upon interaction with the DnaJ-bound protein, DnaK hydrolyzes its bound ATP, resulting in the formation of a stable complex. GrpE releases ADP from DnaK; ATP binding to DnaK triggers the release of the substrate protein, thus completing the reaction cycle. Several rounds of ATP-dependent interactions between DnaJ, DnaK and GrpE are required for fully efficient folding. Also involved, together with DnaK and GrpE, in the DNA replication of plasmids through activation of initiation proteins. This Lachnospira eligens (strain ATCC 27750 / DSM 3376 / VPI C15-48 / C15-B4) (Eubacterium eligens) protein is Chaperone protein DnaJ.